A 299-amino-acid polypeptide reads, in one-letter code: ATP phosphoribosyltransferase (299 aa).

It belongs to the ATP phosphoribosyltransferase family. Long subfamily. In terms of assembly, equilibrium between an active dimeric form, an inactive hexameric form and higher aggregates. Interconversion between the various forms is largely reversible and is influenced by the natural substrates and inhibitors of the enzyme. Mg(2+) serves as cofactor.

The protein resides in the cytoplasm. The enzyme catalyses 1-(5-phospho-beta-D-ribosyl)-ATP + diphosphate = 5-phospho-alpha-D-ribose 1-diphosphate + ATP. Its pathway is amino-acid biosynthesis; L-histidine biosynthesis; L-histidine from 5-phospho-alpha-D-ribose 1-diphosphate: step 1/9. Its activity is regulated as follows. Feedback inhibited by histidine. Catalyzes the condensation of ATP and 5-phosphoribose 1-diphosphate to form N'-(5'-phosphoribosyl)-ATP (PR-ATP). Has a crucial role in the pathway because the rate of histidine biosynthesis seems to be controlled primarily by regulation of HisG enzymatic activity. The protein is ATP phosphoribosyltransferase of Sodalis glossinidius (strain morsitans).